The sequence spans 446 residues: Na(+)-translocating NADH-quinone reductase subunit A (446 aa).

This sequence belongs to the NqrA family. As to quaternary structure, composed of six subunits; NqrA, NqrB, NqrC, NqrD, NqrE and NqrF.

The catalysed reaction is a ubiquinone + n Na(+)(in) + NADH + H(+) = a ubiquinol + n Na(+)(out) + NAD(+). Functionally, NQR complex catalyzes the reduction of ubiquinone-1 to ubiquinol by two successive reactions, coupled with the transport of Na(+) ions from the cytoplasm to the periplasm. NqrA to NqrE are probably involved in the second step, the conversion of ubisemiquinone to ubiquinol. This is Na(+)-translocating NADH-quinone reductase subunit A from Vibrio anguillarum (Listonella anguillarum).